Consider the following 200-residue polypeptide: Ras-related protein RHN1 (200 aa).

GTP is bound by residues 17–25 (GDMGAGKSS), 36–42 (LEFQEST), 65–69 (DTAGQ), 123–126 (NKAD), and 153–155 (SAK). Residues 39–47 (QESTIGAAF) carry the Effector region motif. S-geranylgeranyl cysteine attachment occurs at residues Cys-198 and Cys-199.

The protein belongs to the small GTPase superfamily. Rab family. In terms of tissue distribution, high in stem, root, and inflorescence.

It is found in the cell membrane. In terms of biological role, protein transport. Probably involved in vesicular traffic. In Nicotiana plumbaginifolia (Leadwort-leaved tobacco), this protein is Ras-related protein RHN1 (RHN1).